The chain runs to 533 residues: Calcium-dependent protein kinase 19 (533 aa).

2 stretches are compositionally biased toward polar residues: residues 1–12 (MGSCCSRATSPD) and 24–38 (SHQT…SYNH). Positions 1–53 (MGSCCSRATSPDSGRGGANGYGYSHQTKPAQTTPSYNHPQPPPPAEVRYTPSA) are disordered. A lipid anchor (N-myristoyl glycine) is attached at glycine 2. In terms of domain architecture, Protein kinase spans 85–343 (YSLGKELGRG…SAQVLQHPWL (259 aa)). ATP is bound by residues 91–99 (LGRGQFGVT) and lysine 114. Aspartate 209 functions as the Proton acceptor in the catalytic mechanism. The tract at residues 348-378 (ASDKPIDSAVLSRMKQFRAMNKLKKMALKVI) is autoinhibitory domain. EF-hand domains lie at 385-420 (EEIK…LGSK), 421-456 (LSEA…RHKL), 457-492 (ERDE…HEMG), and 497-527 (IKDI…GGMQ). 19 residues coordinate Ca(2+): aspartate 398, aspartate 400, serine 402, threonine 404, glutamate 409, aspartate 434, aspartate 436, asparagine 438, serine 440, glutamate 445, aspartate 470, aspartate 472, serine 474, glutamate 481, aspartate 505, aspartate 507, aspartate 509, arginine 511, and glutamate 516.

It belongs to the protein kinase superfamily. Ser/Thr protein kinase family. CDPK subfamily. Expressed in root tips, leaf veins, mesophyll cells, flower reproductive organs and mature pollen grains.

The protein localises to the membrane. It catalyses the reaction L-seryl-[protein] + ATP = O-phospho-L-seryl-[protein] + ADP + H(+). It carries out the reaction L-threonyl-[protein] + ATP = O-phospho-L-threonyl-[protein] + ADP + H(+). With respect to regulation, activated by calcium. Autophosphorylation may play an important role in the regulation of the kinase activity. In terms of biological role, may play a role in signal transduction pathways that involve calcium as a second messenger. This chain is Calcium-dependent protein kinase 19, found in Oryza sativa subsp. japonica (Rice).